Here is a 133-residue protein sequence, read N- to C-terminus: uncharacterized protein (133 aa).

2 helical membrane-spanning segments follow: residues 8–28 (MVLL…LLLL) and 46–66 (SFSI…SIGA).

It localises to the membrane. This is an uncharacterized protein from Saccharomyces cerevisiae (strain ATCC 204508 / S288c) (Baker's yeast).